The sequence spans 148 residues: Deoxyuridine 5'-triphosphate nucleotidohydrolase (148 aa).

Substrate contacts are provided by residues 67–69, Asn80, 84–86, and Lys94; these read RSG and TID.

Belongs to the dUTPase family. It depends on Mg(2+) as a cofactor.

The enzyme catalyses dUTP + H2O = dUMP + diphosphate + H(+). It participates in pyrimidine metabolism; dUMP biosynthesis; dUMP from dCTP (dUTP route): step 2/2. This enzyme is involved in nucleotide metabolism: it produces dUMP, the immediate precursor of thymidine nucleotides and it decreases the intracellular concentration of dUTP so that uracil cannot be incorporated into DNA. This is Deoxyuridine 5'-triphosphate nucleotidohydrolase from Orientia tsutsugamushi (strain Ikeda) (Rickettsia tsutsugamushi).